Here is a 715-residue protein sequence, read N- to C-terminus: Fatty acid oxidation complex subunit alpha (715 aa).

Positions 1 to 190 are enoyl-CoA hydratase/isomerase; sequence MIYEGKAITV…KVGAVDAVVA (190 aa). A substrate-binding site is contributed by Asp-297. The interval 312–715 is 3-hydroxyacyl-CoA dehydrogenase; the sequence is RDVKQAAVLG…MAKNGQSFFG (404 aa). NAD(+)-binding positions include Met-325, Asp-344, 401-403, Lys-408, and Ser-430; that span reads VVE. The For 3-hydroxyacyl-CoA dehydrogenase activity role is filled by His-451. Position 454 (Asn-454) interacts with NAD(+). Substrate is bound by residues Asn-501 and Tyr-660.

The protein in the N-terminal section; belongs to the enoyl-CoA hydratase/isomerase family. This sequence in the C-terminal section; belongs to the 3-hydroxyacyl-CoA dehydrogenase family. In terms of assembly, heterotetramer of two alpha chains (FadB) and two beta chains (FadA).

The enzyme catalyses a (3S)-3-hydroxyacyl-CoA + NAD(+) = a 3-oxoacyl-CoA + NADH + H(+). It catalyses the reaction a (3S)-3-hydroxyacyl-CoA = a (2E)-enoyl-CoA + H2O. It carries out the reaction a 4-saturated-(3S)-3-hydroxyacyl-CoA = a (3E)-enoyl-CoA + H2O. The catalysed reaction is (3S)-3-hydroxybutanoyl-CoA = (3R)-3-hydroxybutanoyl-CoA. The enzyme catalyses a (3Z)-enoyl-CoA = a 4-saturated (2E)-enoyl-CoA. It catalyses the reaction a (3E)-enoyl-CoA = a 4-saturated (2E)-enoyl-CoA. The protein operates within lipid metabolism; fatty acid beta-oxidation. In terms of biological role, involved in the aerobic and anaerobic degradation of long-chain fatty acids via beta-oxidation cycle. Catalyzes the formation of 3-oxoacyl-CoA from enoyl-CoA via L-3-hydroxyacyl-CoA. It can also use D-3-hydroxyacyl-CoA and cis-3-enoyl-CoA as substrate. This is Fatty acid oxidation complex subunit alpha from Pseudomonas fluorescens (strain SBW25).